A 154-amino-acid chain; its full sequence is Transcriptional repressor NrdR (154 aa).

The segment at Cys-3–Cys-34 is a zinc-finger region. The region spanning Pro-49–Glu-139 is the ATP-cone domain.

This sequence belongs to the NrdR family. Requires Zn(2+) as cofactor.

In terms of biological role, negatively regulates transcription of bacterial ribonucleotide reductase nrd genes and operons by binding to NrdR-boxes. This chain is Transcriptional repressor NrdR, found in Pseudomonas entomophila (strain L48).